A 277-amino-acid chain; its full sequence is Caspase-3 (277 aa).

N-acetylmethionine is present on methionine 1. 2 consecutive propeptides follow at residues 1 to 9 (MDNNETSVD) and 10 to 28 (SKSI…KSMD). Residue lysine 11 is modified to N6-acetyllysine. The residue at position 26 (serine 26) is a Phosphoserine. Catalysis depends on residues histidine 121 and cysteine 163. Cysteine 163 carries the post-translational modification S-nitrosocysteine; in inhibited form.

It belongs to the peptidase C14A family. In terms of assembly, heterotetramer that consists of two anti-parallel arranged heterodimers, each one formed by a 17 kDa (p17) and a 12 kDa (p12) subunit. Interacts with BIRC6/bruce. In terms of processing, cleavage by granzyme B, caspase-6, caspase-8 and caspase-10 generates the two active subunits. Additional processing of the propeptides is likely due to the autocatalytic activity of the activated protease. Active heterodimers between the small subunit of caspase-7 protease and the large subunit of caspase-3 also occur and vice versa. S-nitrosylated on its catalytic site cysteine in unstimulated cell lines and denitrosylated upon activation of the Fas apoptotic pathway, associated with an increase in intracellular caspase activity. Fas therefore activates caspase-3 not only by inducing the cleavage of the caspase zymogen to its active subunits, but also by stimulating the denitrosylation of its active site thiol. Post-translationally, ubiquitinated by BIRC6; this activity is inhibited by DIABLO/SMAC. Expressed in heart, brain, liver, and muscle but not in kidney or testis.

It localises to the cytoplasm. The enzyme catalyses Strict requirement for an Asp residue at positions P1 and P4. It has a preferred cleavage sequence of Asp-Xaa-Xaa-Asp-|- with a hydrophobic amino-acid residue at P2 and a hydrophilic amino-acid residue at P3, although Val or Ala are also accepted at this position.. With respect to regulation, inhibited by BIRC6; following inhibition of BIRC6-caspase binding by DIABLO/SMAC, BIRC6 is subjected to caspase cleavage, leading to an increase in active caspases. In terms of biological role, involved in the activation cascade of caspases responsible for apoptosis execution. At the onset of apoptosis, it proteolytically cleaves poly(ADP-ribose) polymerase PARP1 at a '216-Asp-|-Gly-217' bond. Cleaves and activates sterol regulatory element binding proteins (SREBPs) between the basic helix-loop-helix leucine zipper domain and the membrane attachment domain. Cleaves and activates caspase-6, -7 and -9 (CASP6, CASP7 and CASP9, respectively). Cleaves and inactivates interleukin-18 (IL18). Triggers cell adhesion in sympathetic neurons through RET cleavage. Cleaves IL-1 beta between an Asp and an Ala, releasing the mature cytokine which is involved in a variety of inflammatory processes. Cleaves and inhibits serine/threonine-protein kinase AKT1 in response to oxidative stress. Acts as an inhibitor of type I interferon production during virus-induced apoptosis by mediating cleavage of antiviral proteins CGAS, IRF3 and MAVS, thereby preventing cytokine overproduction. Also involved in pyroptosis by mediating cleavage and activation of gasdermin-E (GSDME). Cleaves XRCC4 and phospholipid scramblase proteins XKR4, XKR8 and XKR9, leading to promote phosphatidylserine exposure on apoptotic cell surface. Cleaves BIRC6 following inhibition of BIRC6-caspase binding by DIABLO/SMAC. This chain is Caspase-3 (Casp3), found in Rattus norvegicus (Rat).